We begin with the raw amino-acid sequence, 58 residues long: Short neurotoxin MS11 (58 aa).

4 cysteine pairs are disulfide-bonded: C3–C20, C13–C38, C42–C50, and C51–C56.

This sequence belongs to the three-finger toxin family. Short-chain subfamily. In terms of tissue distribution, expressed by the venom gland.

It localises to the secreted. Its function is as follows. Produces peripheral paralysis by blocking neuromuscular transmission at the postsynaptic site. Binds to and inhibits the endogenous nicotinic acetylcholine receptors (nAChR) in the human rhabdomyosarcoma TE 671 cell line with an IC(50) of 266 mM. Not toxic to mice by intraperitoneal injection or to zebrafish by injection at the back dorsolateral region. The polypeptide is Short neurotoxin MS11 (Micrurus surinamensis (Surinam coral snake)).